Here is a 121-residue protein sequence, read N- to C-terminus: Large ribosomal subunit protein uL18 (121 aa).

It belongs to the universal ribosomal protein uL18 family. Part of the 50S ribosomal subunit; part of the 5S rRNA/L5/L18/L25 subcomplex. Contacts the 5S and 23S rRNAs.

This is one of the proteins that bind and probably mediate the attachment of the 5S RNA into the large ribosomal subunit, where it forms part of the central protuberance. The sequence is that of Large ribosomal subunit protein uL18 from Polaromonas naphthalenivorans (strain CJ2).